The sequence spans 741 residues: Translation initiation factor IF-2 (741 aa).

Composition is skewed to basic and acidic residues over residues 48-74 (HQYR…DKPK) and 107-123 (KGKE…EKKA). Positions 48-158 (HQYRPKAEKK…PQPAKKEKEL (111 aa)) are disordered. Residues 127 to 139 (AKKKGKGPAKGKK) show a composition bias toward basic residues. The span at 140-151 (QAAPAAKQVPQP) shows a compositional bias: low complexity. Residues 242 to 411 (ERPPVVTIMG…LLVSEMEELK (170 aa)) form the tr-type G domain. A G1 region spans residues 251 to 258 (GHVDHGKT). Residue 251–258 (GHVDHGKT) coordinates GTP. Residues 276-280 (GITQH) are G2. Residues 297–300 (DTPG) form a G3 region. Residues 297-301 (DTPGH) and 351-354 (NKMD) each bind GTP. Positions 351–354 (NKMD) are G4. Residues 387-389 (SAK) form a G5 region.

It belongs to the TRAFAC class translation factor GTPase superfamily. Classic translation factor GTPase family. IF-2 subfamily.

Its subcellular location is the cytoplasm. In terms of biological role, one of the essential components for the initiation of protein synthesis. Protects formylmethionyl-tRNA from spontaneous hydrolysis and promotes its binding to the 30S ribosomal subunits. Also involved in the hydrolysis of GTP during the formation of the 70S ribosomal complex. The protein is Translation initiation factor IF-2 (infB) of Geobacillus stearothermophilus (Bacillus stearothermophilus).